The following is a 92-amino-acid chain: Large ribosomal subunit protein eL42 (92 aa).

Zn(2+) is bound by residues Cys11, Cys14, Cys70, and Cys73. The C4-type zinc finger occupies Cys11–Cys73.

It belongs to the eukaryotic ribosomal protein eL42 family. Part of the 50S ribosomal subunit. The cofactor is Zn(2+).

Functionally, binds to the 23S rRNA. The polypeptide is Large ribosomal subunit protein eL42 (Methanothermobacter thermautotrophicus (strain ATCC 29096 / DSM 1053 / JCM 10044 / NBRC 100330 / Delta H) (Methanobacterium thermoautotrophicum)).